The following is a 315-amino-acid chain: Acetyl-coenzyme A carboxylase carboxyl transferase subunit alpha (315 aa).

The CoA carboxyltransferase C-terminal domain maps to 39 to 293 (RLQDKSSTLT…RADLIEQLDM (255 aa)).

Belongs to the AccA family. As to quaternary structure, acetyl-CoA carboxylase is a heterohexamer composed of biotin carboxyl carrier protein (AccB), biotin carboxylase (AccC) and two subunits each of ACCase subunit alpha (AccA) and ACCase subunit beta (AccD).

The protein localises to the cytoplasm. The catalysed reaction is N(6)-carboxybiotinyl-L-lysyl-[protein] + acetyl-CoA = N(6)-biotinyl-L-lysyl-[protein] + malonyl-CoA. The protein operates within lipid metabolism; malonyl-CoA biosynthesis; malonyl-CoA from acetyl-CoA: step 1/1. Functionally, component of the acetyl coenzyme A carboxylase (ACC) complex. First, biotin carboxylase catalyzes the carboxylation of biotin on its carrier protein (BCCP) and then the CO(2) group is transferred by the carboxyltransferase to acetyl-CoA to form malonyl-CoA. The chain is Acetyl-coenzyme A carboxylase carboxyl transferase subunit alpha from Pseudomonas entomophila (strain L48).